The primary structure comprises 208 residues: FMN-dependent NADH:quinone oxidoreductase 1 (208 aa).

Residue Ser10 coordinates FMN.

The protein belongs to the azoreductase type 1 family. As to quaternary structure, homodimer. Requires FMN as cofactor.

It catalyses the reaction 2 a quinone + NADH + H(+) = 2 a 1,4-benzosemiquinone + NAD(+). It carries out the reaction N,N-dimethyl-1,4-phenylenediamine + anthranilate + 2 NAD(+) = 2-(4-dimethylaminophenyl)diazenylbenzoate + 2 NADH + 2 H(+). Its function is as follows. Quinone reductase that provides resistance to thiol-specific stress caused by electrophilic quinones. Contributes to resistance to 2-methylhydroquinone (2-MHQ) and catechol. In terms of biological role, also exhibits azoreductase activity. Catalyzes the reductive cleavage of the azo bond in aromatic azo compounds to the corresponding amines. In Bacillus subtilis (strain 168), this protein is FMN-dependent NADH:quinone oxidoreductase 1.